A 1118-amino-acid polypeptide reads, in one-letter code: Error-prone DNA polymerase (1118 aa).

The tract at residues 1071–1118 is disordered; sequence GPQPMGYAKEVGSDRRSRPEIGNAPARQDLATLSEEAEQVMPKGRNFQ.

This sequence belongs to the DNA polymerase type-C family. DnaE2 subfamily.

Its subcellular location is the cytoplasm. It carries out the reaction DNA(n) + a 2'-deoxyribonucleoside 5'-triphosphate = DNA(n+1) + diphosphate. Functionally, DNA polymerase involved in damage-induced mutagenesis and translesion synthesis (TLS). It is not the major replicative DNA polymerase. The polypeptide is Error-prone DNA polymerase (Mesorhizobium japonicum (strain LMG 29417 / CECT 9101 / MAFF 303099) (Mesorhizobium loti (strain MAFF 303099))).